Reading from the N-terminus, the 342-residue chain is Phenylalanine--tRNA ligase alpha subunit (342 aa).

Residue Glu257 participates in Mg(2+) binding.

Belongs to the class-II aminoacyl-tRNA synthetase family. Phe-tRNA synthetase alpha subunit type 1 subfamily. As to quaternary structure, tetramer of two alpha and two beta subunits. Mg(2+) serves as cofactor.

It is found in the cytoplasm. It carries out the reaction tRNA(Phe) + L-phenylalanine + ATP = L-phenylalanyl-tRNA(Phe) + AMP + diphosphate + H(+). The polypeptide is Phenylalanine--tRNA ligase alpha subunit (Chlamydia trachomatis serovar A (strain ATCC VR-571B / DSM 19440 / HAR-13)).